The primary structure comprises 344 residues: MVTERQQDILNLIIDIFTKTHEPVGSKALQESINSSSATIRNDMAELEKQGLLEKAHTSSGRMPSVAGFQYYVKHSLDFDRLAENEVYEIVKAFDQEFFKLEDILQEAANLLTDLSGCTVVALDVEPSRQRLTAFDIVVLGQHTALAVFTLDESRTVTSQFLIPRNFLQEDLLKLKSIIQERFLGHTVLDIHYKIRTEIPQIIQRYFTTTDNVIDLFEHIFKEMFNENIVMAGKVNLLNFANLAAYQFFDQPQKVALEIREGLREDQMQNVRVADGQESCLADLAVISSKFLIPYRGVGILAIIGPVNLDYQQLINQINVVNRVLTMKLTDFYRYLSSNHYEVH.

It belongs to the HrcA family.

In terms of biological role, negative regulator of class I heat shock genes (grpE-dnaK-dnaJ and groELS operons). Prevents heat-shock induction of these operons. This is Heat-inducible transcription repressor HrcA from Streptococcus pneumoniae (strain ATCC 700669 / Spain 23F-1).